A 117-amino-acid polypeptide reads, in one-letter code: Large ribosomal subunit protein bL20c (117 aa).

Belongs to the bacterial ribosomal protein bL20 family.

The protein resides in the plastid. It is found in the chloroplast. Its function is as follows. Binds directly to 23S ribosomal RNA and is necessary for the in vitro assembly process of the 50S ribosomal subunit. It is not involved in the protein synthesizing functions of that subunit. The chain is Large ribosomal subunit protein bL20c from Acorus gramineus (Dwarf sweet flag).